The following is a 39-amino-acid chain: Large ribosomal subunit protein bL36 (39 aa).

Belongs to the bacterial ribosomal protein bL36 family.

In Levilactobacillus brevis (strain ATCC 367 / BCRC 12310 / CIP 105137 / JCM 1170 / LMG 11437 / NCIMB 947 / NCTC 947) (Lactobacillus brevis), this protein is Large ribosomal subunit protein bL36.